Here is a 333-residue protein sequence, read N- to C-terminus: Ketol-acid reductoisomerase (NADP(+)) (333 aa).

One can recognise a KARI N-terminal Rossmann domain in the interval Thr-6 to Thr-186. Residues Tyr-29–Gln-32, Lys-52, Ser-55, Ser-57, and Asp-87–Gln-90 each bind NADP(+). The active site involves His-112. An NADP(+)-binding site is contributed by Gly-138. In terms of domain architecture, KARI C-terminal knotted spans Thr-187 to Ser-332. Positions 195, 199, 231, and 235 each coordinate Mg(2+). Ser-256 is a substrate binding site.

It belongs to the ketol-acid reductoisomerase family. Mg(2+) is required as a cofactor.

The enzyme catalyses (2R)-2,3-dihydroxy-3-methylbutanoate + NADP(+) = (2S)-2-acetolactate + NADPH + H(+). It carries out the reaction (2R,3R)-2,3-dihydroxy-3-methylpentanoate + NADP(+) = (S)-2-ethyl-2-hydroxy-3-oxobutanoate + NADPH + H(+). The protein operates within amino-acid biosynthesis; L-isoleucine biosynthesis; L-isoleucine from 2-oxobutanoate: step 2/4. It participates in amino-acid biosynthesis; L-valine biosynthesis; L-valine from pyruvate: step 2/4. In terms of biological role, involved in the biosynthesis of branched-chain amino acids (BCAA). Catalyzes an alkyl-migration followed by a ketol-acid reduction of (S)-2-acetolactate (S2AL) to yield (R)-2,3-dihydroxy-isovalerate. In the isomerase reaction, S2AL is rearranged via a Mg-dependent methyl migration to produce 3-hydroxy-3-methyl-2-ketobutyrate (HMKB). In the reductase reaction, this 2-ketoacid undergoes a metal-dependent reduction by NADPH to yield (R)-2,3-dihydroxy-isovalerate. This Tropheryma whipplei (strain Twist) (Whipple's bacillus) protein is Ketol-acid reductoisomerase (NADP(+)).